Consider the following 641-residue polypeptide: Chaperone protein HtpG (641 aa).

An a; substrate-binding region spans residues 1–348 (MTTATEKQTL…SNDLSLNVSR (348 aa)). The interval 349-565 (EILQNDKAVE…AYDMGVQMRR (217 aa)) is b. The interval 566–641 (IMEAAGQALP…KLLLELSNAG (76 aa)) is c.

It belongs to the heat shock protein 90 family. As to quaternary structure, homodimer.

The protein localises to the cytoplasm. Its function is as follows. Molecular chaperone. Has ATPase activity. In Hahella chejuensis (strain KCTC 2396), this protein is Chaperone protein HtpG.